The following is a 586-amino-acid chain: Arginine--tRNA ligase (586 aa).

Positions 127–137 (PNVAKEMHVGH) match the 'HIGH' region motif.

The protein belongs to the class-I aminoacyl-tRNA synthetase family. As to quaternary structure, monomer.

The protein localises to the cytoplasm. It catalyses the reaction tRNA(Arg) + L-arginine + ATP = L-arginyl-tRNA(Arg) + AMP + diphosphate. The protein is Arginine--tRNA ligase (argS) of Streptomyces coelicolor (strain ATCC BAA-471 / A3(2) / M145).